The sequence spans 593 residues: Probable metalloendopeptidase G1-type (593 aa).

Histidine 41 is a Zn(2+) binding site. Residue glutamate 44 is part of the active site. Histidine 45 contributes to the Zn(2+) binding site.

The protein belongs to the peptidase M44 family. Zn(2+) serves as cofactor.

Functionally, seems to be involved in viral proteins maturation by cleavage at Ala-Gly-|-Xaa motifs. In Homo sapiens (Human), this protein is Probable metalloendopeptidase G1-type.